The following is a 260-amino-acid chain: uncharacterized protein (260 aa).

A signal peptide spans 1–22 (MKHSKKLLLCISFLLITIFISG). Cys23 carries N-palmitoyl cysteine lipidation. Residue Cys23 is the site of S-diacylglycerol cysteine attachment.

Belongs to the staphylococcal tandem lipoprotein family.

The protein resides in the cell membrane. This is an uncharacterized protein from Staphylococcus epidermidis (strain ATCC 35984 / DSM 28319 / BCRC 17069 / CCUG 31568 / BM 3577 / RP62A).